Here is a 228-residue protein sequence, read N- to C-terminus: RNA-free ribonuclease P (228 aa).

Belongs to the HARP family.

The enzyme catalyses Endonucleolytic cleavage of RNA, removing 5'-extranucleotides from tRNA precursor.. RNA-free RNase P that catalyzes the removal of the 5'-leader sequence from pre-tRNA to produce the mature 5'-terminus. This Methanopyrus kandleri (strain AV19 / DSM 6324 / JCM 9639 / NBRC 100938) protein is RNA-free ribonuclease P.